A 445-amino-acid chain; its full sequence is ATP-dependent protease ATPase subunit HslU (445 aa).

Residues isoleucine 17, 59-64 (GVGKTE), aspartate 254, glutamate 319, and arginine 391 each bind ATP.

This sequence belongs to the ClpX chaperone family. HslU subfamily. As to quaternary structure, a double ring-shaped homohexamer of HslV is capped on each side by a ring-shaped HslU homohexamer. The assembly of the HslU/HslV complex is dependent on binding of ATP.

The protein resides in the cytoplasm. In terms of biological role, ATPase subunit of a proteasome-like degradation complex; this subunit has chaperone activity. The binding of ATP and its subsequent hydrolysis by HslU are essential for unfolding of protein substrates subsequently hydrolyzed by HslV. HslU recognizes the N-terminal part of its protein substrates and unfolds these before they are guided to HslV for hydrolysis. The protein is ATP-dependent protease ATPase subunit HslU of Pseudomonas syringae pv. tomato (strain ATCC BAA-871 / DC3000).